A 213-amino-acid polypeptide reads, in one-letter code: Protein Syd (213 aa).

This sequence belongs to the Syd family.

Its subcellular location is the cell inner membrane. Interacts with the SecY protein in vivo. May bind preferentially to an uncomplexed state of SecY, thus functioning either as a chelating agent for excess SecY in the cell or as a regulatory factor that negatively controls the translocase function. In Shewanella halifaxensis (strain HAW-EB4), this protein is Protein Syd.